Consider the following 878-residue polypeptide: Aconitate hydratase A (878 aa).

3 residues coordinate [4Fe-4S] cluster: C426, C492, and C495.

This sequence belongs to the aconitase/IPM isomerase family. In terms of assembly, monomer. It depends on [4Fe-4S] cluster as a cofactor.

It carries out the reaction citrate = D-threo-isocitrate. It catalyses the reaction (2S,3R)-3-hydroxybutane-1,2,3-tricarboxylate = 2-methyl-cis-aconitate + H2O. It participates in carbohydrate metabolism; tricarboxylic acid cycle; isocitrate from oxaloacetate: step 2/2. Its pathway is organic acid metabolism; propanoate degradation. Functionally, involved in the catabolism of short chain fatty acids (SCFA) via the tricarboxylic acid (TCA)(acetyl degradation route) and probably the 2-methylcitrate cycle I (propionate degradation route). Catalyzes the reversible isomerization of citrate to isocitrate via cis-aconitate. Could catalyze the hydration of 2-methyl-cis-aconitate to yield (2R,3S)-2-methylisocitrate. The apo form of AcnA functions as a RNA-binding regulatory protein. The sequence is that of Aconitate hydratase A (acnA) from Rickettsia conorii (strain ATCC VR-613 / Malish 7).